We begin with the raw amino-acid sequence, 243 residues long: Ribosomal RNA small subunit methyltransferase G (243 aa).

Residues glycine 97, leucine 102, 148–149 (VE), and arginine 161 contribute to the S-adenosyl-L-methionine site.

Belongs to the methyltransferase superfamily. RNA methyltransferase RsmG family.

The protein localises to the cytoplasm. The catalysed reaction is guanosine(527) in 16S rRNA + S-adenosyl-L-methionine = N(7)-methylguanosine(527) in 16S rRNA + S-adenosyl-L-homocysteine. Functionally, specifically methylates the N7 position of guanine in position 527 of 16S rRNA. The polypeptide is Ribosomal RNA small subunit methyltransferase G (Paracidovorax citrulli (strain AAC00-1) (Acidovorax citrulli)).